A 247-amino-acid chain; its full sequence is Probable transcriptional regulatory protein GTNG_2524 (247 aa).

Residues 1 to 14 are compositionally biased toward basic residues; sequence MAGHSKWKNIQRRK. The segment at 1 to 21 is disordered; sequence MAGHSKWKNIQRRKNAQDAKR.

Belongs to the TACO1 family.

It localises to the cytoplasm. The chain is Probable transcriptional regulatory protein GTNG_2524 from Geobacillus thermodenitrificans (strain NG80-2).